Reading from the N-terminus, the 421-residue chain is Myb-related protein Pp2 (421 aa).

2 HTH myb-type domains span residues 9–61 and 62–116; these read KVGL…TNYL and RPDL…KKRL. 2 consecutive DNA-binding regions (H-T-H motif) follow at residues 37–61 and 89–112; these read WRAIPKLAGLLRCGKSCRLRWTNYL and WSRIAAQLPGRTDNEIKNYWNTRL. Positions 119–240 are disordered; that stretch reads QGLDPNTHLP…VTTKSHEDHR (122 aa). Positions 136–147 are enriched in acidic residues; the sequence is DTEDDTDDEGGD.

The protein localises to the nucleus. Its function is as follows. Possible transcription activator. This chain is Myb-related protein Pp2 (PP2), found in Physcomitrium patens (Spreading-leaved earth moss).